The following is a 400-amino-acid chain: 3-hydroxybenzoate 6-hydroxylase (400 aa).

Belongs to the 3-hydroxybenzoate 6-hydroxylase family. Monomer. FAD is required as a cofactor.

The catalysed reaction is 3-hydroxybenzoate + NADH + O2 + H(+) = 2,5-dihydroxybenzoate + NAD(+) + H2O. In terms of biological role, catalyzes the NAD- or NADP-dependent conversion of 3-hydroxybenzoate to gentisate. The affinity of the enzyme toward NAD is twice as high as for NADP. The protein is 3-hydroxybenzoate 6-hydroxylase (nagX) of Polaromonas naphthalenivorans (strain CJ2).